A 148-amino-acid polypeptide reads, in one-letter code: Globin-3 (148 aa).

In terms of domain architecture, Globin spans 2–148 (TLTKHEQDIL…HVFPMMAAEI (147 aa)). His-99 contacts heme.

Belongs to the globin family. As to quaternary structure, monomer.

In terms of biological role, oxygen binding protein. This is Globin-3 from Paramphistomum epiclitum.